The chain runs to 357 residues: Eukaryotic translation initiation factor 3 subunit F (357 aa).

A disordered region spans residues 1–82 (MATPAVPVSA…PAPALPGPAL (82 aa)). Ala2 carries the N-acetylalanine modification. A compositionally biased stretch (pro residues) spans 9–36 (SAPPATPTPVPAAAPASVPAPTPAPAAA). Low complexity predominate over residues 37–74 (PVPAAAPASSSDPAAAAAATAAPGQTPASAQAPAQTPA). Position 46 is a phosphoserine; by CDK11; in vitro (Ser46). In terms of domain architecture, MPN spans 92–222 (VRLHPVILAS…IKAYVSTLMG (131 aa)). Lys238 carries the N6-acetyllysine modification. Ser258 is subject to Phosphoserine.

It belongs to the eIF-3 subunit F family. In terms of assembly, component of the eukaryotic translation initiation factor 3 (eIF-3) complex, which is composed of 13 subunits: EIF3A, EIF3B, EIF3C, EIF3D, EIF3E, EIF3F, EIF3G, EIF3H, EIF3I, EIF3J, EIF3K, EIF3L and EIF3M. The eIF-3 complex appears to include 3 stable modules: module A is composed of EIF3A, EIF3B, EIF3G and EIF3I; module B is composed of EIF3F, EIF3H, and EIF3M; and module C is composed of EIF3C, EIF3D, EIF3E, EIF3K and EIF3L. EIF3C of module C binds EIF3B of module A and EIF3H of module B, thereby linking the three modules. EIF3J is a labile subunit that binds to the eIF-3 complex via EIF3B. The eIF-3 complex interacts with RPS6KB1 under conditions of nutrient depletion. Mitogenic stimulation leads to binding and activation of a complex composed of MTOR and RPTOR, leading to phosphorylation and release of RPS6KB1 and binding of EIF4B to eIF-3. Interacts with RNF139; the interaction leads to protein translation inhibitions in a ubiquitination-dependent manner. Interacts with DTX1, the interaction is required for deubiquitinating activity towards NOTCH1. In terms of processing, phosphorylation is enhanced upon serum stimulation. Phosphorylated during apoptosis by caspase-processed CDK11.

The protein resides in the cytoplasm. It carries out the reaction Thiol-dependent hydrolysis of ester, thioester, amide, peptide and isopeptide bonds formed by the C-terminal Gly of ubiquitin (a 76-residue protein attached to proteins as an intracellular targeting signal).. Component of the eukaryotic translation initiation factor 3 (eIF-3) complex, which is required for several steps in the initiation of protein synthesis. The eIF-3 complex associates with the 40S ribosome and facilitates the recruitment of eIF-1, eIF-1A, eIF-2:GTP:methionyl-tRNAi and eIF-5 to form the 43S pre-initiation complex (43S PIC). The eIF-3 complex stimulates mRNA recruitment to the 43S PIC and scanning of the mRNA for AUG recognition. The eIF-3 complex is also required for disassembly and recycling of post-termination ribosomal complexes and subsequently prevents premature joining of the 40S and 60S ribosomal subunits prior to initiation. The eIF-3 complex specifically targets and initiates translation of a subset of mRNAs involved in cell proliferation, including cell cycling, differentiation and apoptosis, and uses different modes of RNA stem-loop binding to exert either translational activation or repression. Functionally, deubiquitinates activated NOTCH1, promoting its nuclear import, thereby acting as a positive regulator of Notch signaling. The polypeptide is Eukaryotic translation initiation factor 3 subunit F (Homo sapiens (Human)).